The primary structure comprises 197 residues: Protein-methionine-sulfoxide reductase heme-binding subunit MsrQ (197 aa).

Transmembrane regions (helical) follow at residues 10 to 30 (IFIVGCLFPVWWLYEAAMNLL), 42 to 62 (LGLGALTFLLVTLSMTPLQKL), 75 to 95 (LGLWVFAYIVLHILCYLFFIL), 110 to 130 (PYIIVGALGFLGLLVLAVTSN), 147 to 167 (LVYAVLGLGLLHFLWIVRSDL), and 169 to 189 (EWAIYAFIGAVLMVLRIPAVA).

It belongs to the MsrQ family. In terms of assembly, heterodimer of a catalytic subunit (MsrP) and a heme-binding subunit (MsrQ). The cofactor is FMN. It depends on heme b as a cofactor.

The protein localises to the cell inner membrane. Its function is as follows. Part of the MsrPQ system that repairs oxidized periplasmic proteins containing methionine sulfoxide residues (Met-O), using respiratory chain electrons. Thus protects these proteins from oxidative-stress damage caused by reactive species of oxygen and chlorine generated by the host defense mechanisms. MsrPQ is essential for the maintenance of envelope integrity under bleach stress, rescuing a wide series of structurally unrelated periplasmic proteins from methionine oxidation. MsrQ provides electrons for reduction to the reductase catalytic subunit MsrP, using the quinone pool of the respiratory chain. This chain is Protein-methionine-sulfoxide reductase heme-binding subunit MsrQ, found in Pseudomonas putida (strain ATCC 47054 / DSM 6125 / CFBP 8728 / NCIMB 11950 / KT2440).